Consider the following 686-residue polypeptide: Methionine--tRNA ligase (686 aa).

Positions 13–23 (PYANGQIHIGH) match the 'HIGH' region motif. Residues Cys144, Cys147, Cys157, and Cys160 each contribute to the Zn(2+) site. Positions 335–339 (KMSKS) match the 'KMSKS' region motif. Lys338 lines the ATP pocket. The 107-residue stretch at 580 to 686 (DFAKVDLRVA…EGAVPGMRIG (107 aa)) folds into the tRNA-binding domain.

It belongs to the class-I aminoacyl-tRNA synthetase family. MetG type 1 subfamily. As to quaternary structure, homodimer. It depends on Zn(2+) as a cofactor.

It localises to the cytoplasm. It carries out the reaction tRNA(Met) + L-methionine + ATP = L-methionyl-tRNA(Met) + AMP + diphosphate. Functionally, is required not only for elongation of protein synthesis but also for the initiation of all mRNA translation through initiator tRNA(fMet) aminoacylation. In Cupriavidus necator (strain ATCC 17699 / DSM 428 / KCTC 22496 / NCIMB 10442 / H16 / Stanier 337) (Ralstonia eutropha), this protein is Methionine--tRNA ligase.